Consider the following 339-residue polypeptide: Anthranilate phosphoribosyltransferase (339 aa).

Residues Gly-79, 82-83, Thr-87, 89-92, 107-115, and Ser-119 contribute to the 5-phospho-alpha-D-ribose 1-diphosphate site; these read GD, NVST, and KHGNRAVSS. Gly-79 serves as a coordination point for anthranilate. Ser-91 lines the Mg(2+) pocket. Anthranilate is bound at residue Asn-110. Anthranilate is bound at residue Arg-165. Asp-224 and Glu-225 together coordinate Mg(2+).

Belongs to the anthranilate phosphoribosyltransferase family. As to quaternary structure, homodimer. Mg(2+) serves as cofactor.

The enzyme catalyses N-(5-phospho-beta-D-ribosyl)anthranilate + diphosphate = 5-phospho-alpha-D-ribose 1-diphosphate + anthranilate. It participates in amino-acid biosynthesis; L-tryptophan biosynthesis; L-tryptophan from chorismate: step 2/5. In terms of biological role, catalyzes the transfer of the phosphoribosyl group of 5-phosphorylribose-1-pyrophosphate (PRPP) to anthranilate to yield N-(5'-phosphoribosyl)-anthranilate (PRA). The chain is Anthranilate phosphoribosyltransferase from Geobacillus kaustophilus (strain HTA426).